The chain runs to 519 residues: O-fucosyltransferase 1 (519 aa).

Residues 1–24 (MRRLGHHRLHGKTGGVGTKGMVAK) lie on the Cytoplasmic side of the membrane. Residues 25–45 (LSIGVIVLLICTLSLLFSANI) form a helical; Signal-anchor for type II membrane protein membrane-spanning segment. The Lumenal portion of the chain corresponds to 46–519 (GSNREPTRPS…TNSTVTGLER (474 aa)). Residues 67–86 (KSGGWRPSSAPRSDWPPPTK) are disordered. An N-linked (GlcNAc...) asparagine glycan is attached at N118. A substrate-binding site is contributed by 260 to 262 (HLR). N327, N357, and N511 each carry an N-linked (GlcNAc...) asparagine glycan. A disordered region spans residues 497–519 (RLESIRDPDSTSQTNSTVTGLER). Residues 506 to 519 (STSQTNSTVTGLER) show a composition bias toward polar residues.

Belongs to the glycosyltransferase GT106 family.

Its subcellular location is the golgi apparatus membrane. It participates in glycan metabolism. In Arabidopsis thaliana (Mouse-ear cress), this protein is O-fucosyltransferase 1.